Here is a 152-residue protein sequence, read N- to C-terminus: Transcriptional regulator MraZ (152 aa).

SpoVT-AbrB domains lie at 5–52 (VNQL…PLPE) and 81–124 (AQEL…DESL).

Belongs to the MraZ family. In terms of assembly, forms oligomers.

The protein localises to the cytoplasm. It is found in the nucleoid. The chain is Transcriptional regulator MraZ from Halorhodospira halophila (strain DSM 244 / SL1) (Ectothiorhodospira halophila (strain DSM 244 / SL1)).